Reading from the N-terminus, the 293-residue chain is Elongation factor Ts (293 aa).

Positions threonine 80–valine 83 are involved in Mg(2+) ion dislocation from EF-Tu.

Belongs to the EF-Ts family.

The protein localises to the cytoplasm. Associates with the EF-Tu.GDP complex and induces the exchange of GDP to GTP. It remains bound to the aminoacyl-tRNA.EF-Tu.GTP complex up to the GTP hydrolysis stage on the ribosome. The chain is Elongation factor Ts from Lacticaseibacillus casei (strain BL23) (Lactobacillus casei).